The following is a 1791-amino-acid chain: Protein TIC 214 (1791 aa).

Helical transmembrane passes span 19–39 (IINS…FSIG), 68–88 (FIAG…HLAL), 91–111 (PHTI…WNNH), 133–153 (VFLN…SSML), 176–196 (VGWL…LVWI), and 230–250 (IFSI…PSPI). Basic and acidic residues predominate over residues 257-271 (GTSETEERGGTKQDQ). Disordered regions lie at residues 257–278 (GTSE…TEEA) and 1498–1521 (ADQG…PNQE).

Belongs to the TIC214 family. In terms of assembly, part of the Tic complex.

The protein localises to the plastid. It is found in the chloroplast inner membrane. Involved in protein precursor import into chloroplasts. May be part of an intermediate translocation complex acting as a protein-conducting channel at the inner envelope. This is Protein TIC 214 from Aethionema grandiflorum (Persian stone-cress).